Here is a 360-residue protein sequence, read N- to C-terminus: DNA replication and repair protein RecF (360 aa).

Position 30–37 (30–37) interacts with ATP; the sequence is GQNGSGKT.

The protein belongs to the RecF family.

The protein resides in the cytoplasm. Its function is as follows. The RecF protein is involved in DNA metabolism; it is required for DNA replication and normal SOS inducibility. RecF binds preferentially to single-stranded, linear DNA. It also seems to bind ATP. This Shewanella frigidimarina (strain NCIMB 400) protein is DNA replication and repair protein RecF.